The chain runs to 435 residues: Polyadenylate-binding protein RBP47B (435 aa).

The span at 1-15 (MQTTNGSDSTLATSG) shows a compositional bias: polar residues. Disordered stretches follow at residues 1 to 41 (MQTT…QQWM) and 85 to 104 (YGSY…RGSG). Positions 29–41 (QWQQQQQQQQQWM) are enriched in low complexity. RRM domains lie at 108–188 (KTLW…WASF), 202–281 (LSVF…IATP), and 321–393 (ATIF…WGRS). The tract at residues 392-412 (RSPNKQWRGDSGQQWNGGYSR) is disordered.

It belongs to the polyadenylate-binding RBP47 family. In terms of assembly, interacts with the poly(A) tail of mRNA in nucleus. As to expression, expressed at low levels in leaves, stems, flowers, and seedlings.

It is found in the nucleus. Its subcellular location is the cytoplasmic granule. Heterogeneous nuclear ribonucleoprotein (hnRNP)-protein binding the poly(A) tail of mRNA and probably involved in some steps of pre-mRNA maturation. The protein is Polyadenylate-binding protein RBP47B (RBP47B) of Arabidopsis thaliana (Mouse-ear cress).